A 362-amino-acid chain; its full sequence is Cobalt-precorrin-5B C(1)-methyltransferase (362 aa).

This sequence belongs to the CbiD family.

The enzyme catalyses Co-precorrin-5B + S-adenosyl-L-methionine = Co-precorrin-6A + S-adenosyl-L-homocysteine. It participates in cofactor biosynthesis; adenosylcobalamin biosynthesis; cob(II)yrinate a,c-diamide from sirohydrochlorin (anaerobic route): step 6/10. Functionally, catalyzes the methylation of C-1 in cobalt-precorrin-5B to form cobalt-precorrin-6A. The chain is Cobalt-precorrin-5B C(1)-methyltransferase from Burkholderia cenocepacia (strain HI2424).